Here is a 485-residue protein sequence, read N- to C-terminus: MTITPQQLIALLPLLIVGLTVVVVMLSIAWRRNHFLNATLSVLGLNAALVSLWFVGQNGAMDVTPLIRVDGYAMLYTGLVLLASLATCTFAYPWLEGYKDNKEEFYLLVLIAALGGILLAGANHLAALFLGIELISLPLFGLVGYAFRQKRSLEASIKYTILSAAASSFLLFGMALVYANSGNLSFLALGKSLADNMLHEPLLLAGLGLMIVGLGFKLSLVPFHLWTPDVYQGAPAPVSTFLATASKIAIFGVVMRLFLYMPVGNSEAVRVVLGLIAFASIIFGNLMALSQTNIKRLLGYSSISHLGYLLVALIALQSGEMSMEAVGVYLAGYLFSSLGAFGVVSLMSSPYRGPDADSLFSYRGLFWHRPILSAVMTVMMLSLAGIPMTLGFIGKFYVLAVGVHAHLWWLVAAVVVGSAIGLYYYLRVAVSLYLSAPEQLNRDAPSNWQYSAGGIVVLISALLVLVLGIWPQPLISIVQLATPLM.

14 helical membrane passes run 8–28 (LIAL…MLSI), 35–55 (FLNA…LWFV), 75–95 (LYTG…YPWL), 105–125 (FYLL…ANHL), 127–147 (ALFL…GYAF), 159–179 (YTIL…LVYA), 203–223 (LLAG…LVPF), 235–255 (PAPV…GVVM), 271–291 (VVLG…ALSQ), 297–317 (LLGY…IALQ), 326–346 (VGVY…VVSL), 374–394 (AVMT…GFIG), 408–430 (WWLV…RVAV), and 455–475 (IVVL…QPLI).

The protein belongs to the complex I subunit 2 family. NDH-1 is composed of 13 different subunits. Subunits NuoA, H, J, K, L, M, N constitute the membrane sector of the complex.

Its subcellular location is the cell inner membrane. The enzyme catalyses a quinone + NADH + 5 H(+)(in) = a quinol + NAD(+) + 4 H(+)(out). Its function is as follows. NDH-1 shuttles electrons from NADH, via FMN and iron-sulfur (Fe-S) centers, to quinones in the respiratory chain. The immediate electron acceptor for the enzyme in this species is believed to be ubiquinone. Couples the redox reaction to proton translocation (for every two electrons transferred, four hydrogen ions are translocated across the cytoplasmic membrane), and thus conserves the redox energy in a proton gradient. This is NADH-quinone oxidoreductase subunit N from Klebsiella pneumoniae subsp. pneumoniae (strain ATCC 700721 / MGH 78578).